We begin with the raw amino-acid sequence, 170 residues long: Der GTPase-activating protein YihI (170 aa).

Disordered stretches follow at residues methionine 1–glutamine 96 and leucine 145–asparagine 170. Basic and acidic residues predominate over residues threonine 20 to aspartate 30. Over residues arginine 31–histidine 40 the composition is skewed to basic residues. The segment covering tyrosine 147–glutamine 159 has biased composition (acidic residues).

It belongs to the YihI family. As to quaternary structure, interacts with Der.

Its function is as follows. A GTPase-activating protein (GAP) that modifies Der/EngA GTPase function. May play a role in ribosome biogenesis. This chain is Der GTPase-activating protein YihI, found in Salmonella arizonae (strain ATCC BAA-731 / CDC346-86 / RSK2980).